Reading from the N-terminus, the 239-residue chain is Uridylate kinase (239 aa).

12–15 provides a ligand contact to ATP; that stretch reads KLSG. The involved in allosteric activation by GTP stretch occupies residues 21 to 26; that stretch reads GEQGFG. A UMP-binding site is contributed by Gly55. ATP-binding residues include Gly56 and Arg60. UMP contacts are provided by residues Asp75 and 136–143; that span reads TGNPYFST. The ATP site is built by Thr163, Tyr169, and Asp172.

It belongs to the UMP kinase family. In terms of assembly, homohexamer.

The protein resides in the cytoplasm. The catalysed reaction is UMP + ATP = UDP + ADP. It participates in pyrimidine metabolism; CTP biosynthesis via de novo pathway; UDP from UMP (UMPK route): step 1/1. Allosterically activated by GTP. Inhibited by UTP. Catalyzes the reversible phosphorylation of UMP to UDP. This Koribacter versatilis (strain Ellin345) protein is Uridylate kinase.